We begin with the raw amino-acid sequence, 565 residues long: Oxygen-dependent choline dehydrogenase (565 aa).

An FAD-binding site is contributed by 7–36 (DYIICGAGSAGNVLATRLTEDPGVTVLLLE). H474 serves as the catalytic Proton acceptor.

The protein belongs to the GMC oxidoreductase family. FAD serves as cofactor.

It carries out the reaction choline + A = betaine aldehyde + AH2. The catalysed reaction is betaine aldehyde + NAD(+) + H2O = glycine betaine + NADH + 2 H(+). It functions in the pathway amine and polyamine biosynthesis; betaine biosynthesis via choline pathway; betaine aldehyde from choline (cytochrome c reductase route): step 1/1. Functionally, involved in the biosynthesis of the osmoprotectant glycine betaine. Catalyzes the oxidation of choline to betaine aldehyde and betaine aldehyde to glycine betaine at the same rate. The chain is Oxygen-dependent choline dehydrogenase from Burkholderia pseudomallei (strain 1710b).